Here is a 299-residue protein sequence, read N- to C-terminus: MELKRENVLIEALPYMQEFYDSIMVIKVGGNAMVSTQIMEDIIKDIVLLRYVGIKPVIVHGGGPEITEKMERMGKKAEFFQGLRITDDETMEIARMVLVGNINTKIVSLIGIFGGKGVGFTGYDGRMILGHKQAVKRVLVDGVETEVDIGWVGESEVINPEILHIMLEKSYIPVISPIAVDAKGNALNINADTVAGDIAAALKAKKLILMTDVSGLLRNIKDPSSRISRVNLDQIDSLIEEGIISGGMIPKIKGAAVAVKSGVERAHVINGSVSHSMLLELFTDGGVGTMLYGPDHPPV.

Residues 62-63, arginine 84, and asparagine 188 each bind substrate; that span reads GG.

The protein belongs to the acetylglutamate kinase family. ArgB subfamily.

It is found in the cytoplasm. The catalysed reaction is N-acetyl-L-glutamate + ATP = N-acetyl-L-glutamyl 5-phosphate + ADP. The protein operates within amino-acid biosynthesis; L-arginine biosynthesis; N(2)-acetyl-L-ornithine from L-glutamate: step 2/4. Catalyzes the ATP-dependent phosphorylation of N-acetyl-L-glutamate. This Methanosarcina acetivorans (strain ATCC 35395 / DSM 2834 / JCM 12185 / C2A) protein is Acetylglutamate kinase.